Consider the following 207-residue polypeptide: MEKSEKGNGVAPATRSPMALMGSSRNENQEVNTSMRTAETMLRLVPMALGVAALVVMLKNSQSNDFGSVSYSDLGAFRYLVHANGICAGYSLLSAIIAAVPSPSTMPRAWTFFLLDQILTYVILGAAAVSTEVLYLANKGDSAITWSAACGTFAGFCHKATIAVVITFVAVICYAVLSLVSSYRLFTKFDAPVNYPSKTIEATVFHG.

Residues 1–30 form a disordered region; it reads MEKSEKGNGVAPATRSPMALMGSSRNENQE. Residues 1–37 lie on the Cytoplasmic side of the membrane; the sequence is MEKSEKGNGVAPATRSPMALMGSSRNENQEVNTSMRT. The helical transmembrane segment at 38 to 58 threads the bilayer; it reads AETMLRLVPMALGVAALVVML. At 59–79 the chain is on the extracellular side; that stretch reads KNSQSNDFGSVSYSDLGAFRY. The helical transmembrane segment at 80 to 100 threads the bilayer; it reads LVHANGICAGYSLLSAIIAAV. At 101–108 the chain is on the cytoplasmic side; it reads PSPSTMPR. The helical transmembrane segment at 109 to 129 threads the bilayer; sequence AWTFFLLDQILTYVILGAAAV. Residues 130–159 are Extracellular-facing; sequence STEVLYLANKGDSAITWSAACGTFAGFCHK. A helical transmembrane segment spans residues 160–180; the sequence is ATIAVVITFVAVICYAVLSLV. Residues 181 to 207 lie on the Cytoplasmic side of the membrane; sequence SSYRLFTKFDAPVNYPSKTIEATVFHG.

Belongs to the Casparian strip membrane proteins (CASP) family. In terms of assembly, homodimer and heterodimers.

It localises to the cell membrane. This Gossypium hirsutum (Upland cotton) protein is CASP-like protein F16 (F16).